A 247-amino-acid chain; its full sequence is Carboxy-S-adenosyl-L-methionine synthase (247 aa).

S-adenosyl-L-methionine-binding positions include Tyr39, 64-66, 89-90, 117-118, Asn132, and Arg199; these read GCS, DN, and DI.

This sequence belongs to the class I-like SAM-binding methyltransferase superfamily. Cx-SAM synthase family. Homodimer.

The catalysed reaction is prephenate + S-adenosyl-L-methionine = carboxy-S-adenosyl-L-methionine + 3-phenylpyruvate + H2O. Catalyzes the conversion of S-adenosyl-L-methionine (SAM) to carboxy-S-adenosyl-L-methionine (Cx-SAM). This is Carboxy-S-adenosyl-L-methionine synthase from Citrobacter koseri (strain ATCC BAA-895 / CDC 4225-83 / SGSC4696).